Consider the following 469-residue polypeptide: Dynein axonemal assembly factor 11 (469 aa).

4 LRR repeats span residues 20 to 43 (IFSL…DKWC), 44 to 65 (RELK…VSKL), 66 to 89 (KKLE…GCES), and 90 to 110 (LQKL…NSLQ). Residues 114-135 (HLRELYLVGNPCAEYEGYRQYV) enclose the LRRCT domain. Composition is skewed to basic and acidic residues over residues 179–213 (KRAA…RRWY) and 261–286 (SRLE…ELKK). Disordered stretches follow at residues 179–290 (KRAA…KPPR) and 436–469 (KTQA…PPLM).

This sequence belongs to the tilB family.

The protein localises to the cytoplasm. It is found in the cell projection. The protein resides in the cilium. It localises to the dynein axonemal particle. Its subcellular location is the flagellum. In terms of biological role, involved in dynein arm assembly, is important for expression and transporting outer dynein arm (ODA) proteins from the cytoplasm to the cilia. The protein is Dynein axonemal assembly factor 11 (dnaaf11) of Xenopus laevis (African clawed frog).